Consider the following 287-residue polypeptide: Elongation factor Ts (287 aa).

The tract at residues 80–83 (TDFL) is involved in Mg(2+) ion dislocation from EF-Tu.

It belongs to the EF-Ts family.

The protein localises to the cytoplasm. Its function is as follows. Associates with the EF-Tu.GDP complex and induces the exchange of GDP to GTP. It remains bound to the aminoacyl-tRNA.EF-Tu.GTP complex up to the GTP hydrolysis stage on the ribosome. The protein is Elongation factor Ts of Pseudomonas fluorescens (strain SBW25).